We begin with the raw amino-acid sequence, 170 residues long: MYISKQPFRKSKQPFRKSKQTFHKSKQPFRKFKQPFRKSKQPFRKSKQPFRRRSRIGPGDRIDYRNMSLINRFISEQGKILSRRINRLTLKQQRLITLAIKQARILSFLPFRNYENEKQFQAQAISIITGPRHRKNRHIPQLTQKFNSNRNLRNSNQNLRNNNRNLSSDC.

Disordered stretches follow at residues 1-59 and 151-170; these read MYIS…IGPG and NLRN…SSDC. Repeats lie at residues 4–10, 11–17, 18–24, 25–31, 32–38, 39–45, and 46–52; these read SKQPFRK, SKQTFHK, FKQPFRK, and SKQPFRR. A 7 X 7 AA tandem repeats region spans residues 4 to 52; it reads SKQPFRKSKQPFRKSKQTFHKSKQPFRKFKQPFRKSKQPFRKSKQPFRR. Residues 7–55 are compositionally biased toward basic residues; the sequence is PFRKSKQPFRKSKQTFHKSKQPFRKFKQPFRKSKQPFRKSKQPFRRRSR.

It belongs to the bacterial ribosomal protein bS18 family. Part of the 30S ribosomal subunit.

The protein localises to the plastid. The protein resides in the chloroplast. The protein is Small ribosomal subunit protein bS18c (rps18) of Zea mays (Maize).